Consider the following 142-residue polypeptide: Protein-export protein SecB (142 aa).

Belongs to the SecB family. As to quaternary structure, homotetramer, a dimer of dimers. One homotetramer interacts with 1 SecA dimer.

It is found in the cytoplasm. Functionally, one of the proteins required for the normal export of preproteins out of the cell cytoplasm. It is a molecular chaperone that binds to a subset of precursor proteins, maintaining them in a translocation-competent state. It also specifically binds to its receptor SecA. This is Protein-export protein SecB from Buchnera aphidicola subsp. Acyrthosiphon pisum (strain 5A).